Consider the following 350-residue polypeptide: Hydroxymethylglutaryl-CoA synthase (350 aa).

Glutamate 83 acts as the Proton donor/acceptor in catalysis. Cysteine 115 acts as the Acyl-thioester intermediate in catalysis. (3S)-3-hydroxy-3-methylglutaryl-CoA contacts are provided by cysteine 115 and threonine 156. Position 204 (arginine 204) interacts with CoA. (3S)-3-hydroxy-3-methylglutaryl-CoA-binding residues include threonine 206 and histidine 239. The active-site Proton donor/acceptor is the histidine 239. CoA is bound at residue lysine 244. Residues asparagine 271 and serine 301 each contribute to the (3S)-3-hydroxy-3-methylglutaryl-CoA site.

Belongs to the thiolase-like superfamily. Archaeal HMG-CoA synthase family. In terms of assembly, interacts with acetoacetyl-CoA thiolase that catalyzes the precedent step in the pathway and with a DUF35 protein. The acetoacetyl-CoA thiolase/HMG-CoA synthase complex channels the intermediate via a fused CoA-binding site, which allows for efficient coupling of the endergonic thiolase reaction with the exergonic HMGCS reaction.

It carries out the reaction acetoacetyl-CoA + acetyl-CoA + H2O = (3S)-3-hydroxy-3-methylglutaryl-CoA + CoA + H(+). It participates in metabolic intermediate biosynthesis; (R)-mevalonate biosynthesis; (R)-mevalonate from acetyl-CoA: step 2/3. In terms of biological role, catalyzes the condensation of acetyl-CoA with acetoacetyl-CoA to form 3-hydroxy-3-methylglutaryl-CoA (HMG-CoA). Functions in the mevalonate (MVA) pathway leading to isopentenyl diphosphate (IPP), a key precursor for the biosynthesis of isoprenoid compounds that are building blocks of archaeal membrane lipids. The polypeptide is Hydroxymethylglutaryl-CoA synthase (Thermococcus onnurineus (strain NA1)).